The following is a 313-amino-acid chain: Ribosomal RNA small subunit methyltransferase H (313 aa).

Residues 35–37, D55, F79, D100, and Q107 each bind S-adenosyl-L-methionine; that span reads GGH.

The protein belongs to the methyltransferase superfamily. RsmH family.

It localises to the cytoplasm. The enzyme catalyses cytidine(1402) in 16S rRNA + S-adenosyl-L-methionine = N(4)-methylcytidine(1402) in 16S rRNA + S-adenosyl-L-homocysteine + H(+). Functionally, specifically methylates the N4 position of cytidine in position 1402 (C1402) of 16S rRNA. The chain is Ribosomal RNA small subunit methyltransferase H from Burkholderia pseudomallei (strain K96243).